The sequence spans 489 residues: Cytochrome P450 monooxygenase bfoB (489 aa).

Positions 1–18 (MLALYLIAGLLVGLLVYR) are cleaved as a signal peptide. Asn-113, Asn-348, and Asn-386 each carry an N-linked (GlcNAc...) asparagine glycan. Cys-429 contributes to the heme binding site.

The protein belongs to the cytochrome P450 family. It depends on heme as a cofactor.

It carries out the reaction 2 fonsecin B + NADPH + O2 + H(+) = bifonsecin B + NADP(+) + 2 H2O. The catalysed reaction is 2 rubrofusarin B + NADPH + O2 + 3 H(+) = nigerone + NADP(+) + 2 H2O. It participates in secondary metabolite biosynthesis. Functionally, cytochrome P450 monooxygenase; part of the gene cluster that mediates the biosynthesis of bifonsecin B, a dimeric gamma-naphthopyrone. The first step in the biosynthesis of bifonsecin B is the production of gamma-naphthopyrone precursor YWA1 by the non-reducing polyketide synthase albA, via condensation of one acetyl-CoA starter unit with 6 malonyl-CoA units. YWA1 is then methylated by bfoE at position C-6 to yield foncesin which is further methylated at position C-8 by bfoD to produce fonsecin B. A key enzyme in the biosynthetic pathway is the cytochrome P450 monooxygenase bfoB which catalyzes the oxidative dimerization of fonsecin B to bifonsecin B. Bfob also catalyzes the oxidative dimerization of rubrofusarin B into nigerone. The stereoselectivity of bfoB is influenced by the two natural monomeric substrates; homodimerization of fonsecin B yields a stereochemically pure biaryl, M-foncerine B, while rubrofusarin B yields a mixture of enantiomers M- and P-nigerone. This is Cytochrome P450 monooxygenase bfoB from Aspergillus brasiliensis (strain CBS 101740 / IMI 381727 / IBT 21946).